The sequence spans 362 residues: tRNA-specific 2-thiouridylase MnmA (362 aa).

Residues alanine 8–serine 15 and methionine 35 each bind ATP. An interaction with target base in tRNA region spans residues asparagine 95 to aspartate 97. Cysteine 100 serves as the catalytic Nucleophile. Cysteine 100 and cysteine 196 form a disulfide bridge. Glycine 124 is an ATP binding site. The interaction with tRNA stretch occupies residues lysine 146–glutamine 148. The active-site Cysteine persulfide intermediate is cysteine 196. An interaction with tRNA region spans residues arginine 303–tyrosine 304.

The protein belongs to the MnmA/TRMU family.

Its subcellular location is the cytoplasm. The catalysed reaction is S-sulfanyl-L-cysteinyl-[protein] + uridine(34) in tRNA + AH2 + ATP = 2-thiouridine(34) in tRNA + L-cysteinyl-[protein] + A + AMP + diphosphate + H(+). Functionally, catalyzes the 2-thiolation of uridine at the wobble position (U34) of tRNA, leading to the formation of s(2)U34. In Chlamydia abortus (strain DSM 27085 / S26/3) (Chlamydophila abortus), this protein is tRNA-specific 2-thiouridylase MnmA.